The primary structure comprises 566 residues: MQDFKVAISNCLKEKIEDLSKEEIEALIEVPPNKDMGDYAFPCFKLAKVFRKAPNMIASELAESIEPSGEITKVIQLGGYVNFFVNKSQLAETVIKKVLDEKENYGHSDFGKDKTVIVEYSSPNIAKPFHIGHIRTTVIGNALYKIYDSQGYKTIRINHLGDYGTQFGKLIVAFKKWGEKEVVESNPIPELLKLYVRFHDEAEQHPEMEDEARAWFNKLENGDEEAQELWQWFRNESLKEFNRVYKLLDIEFDSLAGESFYSDKMNRVIELLEEKNLLKESKGARIVDLEEYKMPPALITKNDGSTLYMTRDLAAAIYRKETYDFDKCIYVVGSQQNLHFQQWFKVIELMGYDWAKDLIHVGFGMVALEEGTMSTRKGRVVFLEDALNQAIDKTKEIILAKNPNAKNVDEISKQVGVGAVVFQELSNSRIKDYTFSWERTLSFDGETGPYVQYTHARCCAVLRKAEVEVTSDIDYSLLADEDSAEVLRVIESFNKNILLALKKNEPHIVTRFMLDLAQAFNKFYHDNPILVENLEIRKARLALVLATKQTLENSLKLLGMHAPERM.

Residues 123-133 (PNIAKPFHIGH) carry the 'HIGH' region motif.

The protein belongs to the class-I aminoacyl-tRNA synthetase family. In terms of assembly, monomer.

The protein localises to the cytoplasm. The enzyme catalyses tRNA(Arg) + L-arginine + ATP = L-arginyl-tRNA(Arg) + AMP + diphosphate. This is Arginine--tRNA ligase from Clostridioides difficile (strain 630) (Peptoclostridium difficile).